The chain runs to 30 residues: Cyclotide hyen-K (30 aa).

Positions 1–30 form a cross-link, cyclopeptide (Gly-Asn); it reads GIPCGESCIFIPCITTVVGCSCSNKVCYDN. Cystine bridges form between Cys-4–Cys-20, Cys-8–Cys-22, and Cys-13–Cys-27.

Post-translationally, this is a cyclic peptide. In terms of tissue distribution, detected in seeds (at protein level).

Its function is as follows. Probably participates in a plant defense mechanism. In Pigea enneasperma (Spade flower), this protein is Cyclotide hyen-K.